The sequence spans 455 residues: Phosphomethylpyrimidine synthase (455 aa).

Substrate is bound by residues Asn80, Met109, Tyr139, His175, 195-197 (SRG), 236-239 (DALR), and Glu275. His279 lines the Zn(2+) pocket. Position 302 (Tyr302) interacts with substrate. His343 is a Zn(2+) binding site. Cys423, Cys426, and Cys431 together coordinate [4Fe-4S] cluster.

The protein belongs to the ThiC family. [4Fe-4S] cluster is required as a cofactor.

It carries out the reaction 5-amino-1-(5-phospho-beta-D-ribosyl)imidazole + S-adenosyl-L-methionine = 4-amino-2-methyl-5-(phosphooxymethyl)pyrimidine + CO + 5'-deoxyadenosine + formate + L-methionine + 3 H(+). Its pathway is cofactor biosynthesis; thiamine diphosphate biosynthesis. In terms of biological role, catalyzes the synthesis of the hydroxymethylpyrimidine phosphate (HMP-P) moiety of thiamine from aminoimidazole ribotide (AIR) in a radical S-adenosyl-L-methionine (SAM)-dependent reaction. The protein is Phosphomethylpyrimidine synthase of Synechococcus sp. (strain JA-3-3Ab) (Cyanobacteria bacterium Yellowstone A-Prime).